The primary structure comprises 367 residues: GTP cyclohydrolase FolE2 (367 aa).

This sequence belongs to the GTP cyclohydrolase IV family.

The catalysed reaction is GTP + H2O = 7,8-dihydroneopterin 3'-triphosphate + formate + H(+). Its pathway is cofactor biosynthesis; 7,8-dihydroneopterin triphosphate biosynthesis; 7,8-dihydroneopterin triphosphate from GTP: step 1/1. In terms of biological role, converts GTP to 7,8-dihydroneopterin triphosphate. The sequence is that of GTP cyclohydrolase FolE2 from Dinoroseobacter shibae (strain DSM 16493 / NCIMB 14021 / DFL 12).